Reading from the N-terminus, the 544-residue chain is Probable protein kinase UbiB (544 aa).

A Protein kinase domain is found at Asp123–Leu501. Residues Leu129–Val137 and Lys152 each bind ATP. Catalysis depends on Asp287, which acts as the Proton acceptor. 2 helical membrane passes run Ala496–Val516 and Thr519–Trp539.

This sequence belongs to the ABC1 family. UbiB subfamily.

The protein resides in the cell inner membrane. It participates in cofactor biosynthesis; ubiquinone biosynthesis [regulation]. Functionally, is probably a protein kinase regulator of UbiI activity which is involved in aerobic coenzyme Q (ubiquinone) biosynthesis. The chain is Probable protein kinase UbiB from Vibrio vulnificus (strain CMCP6).